A 297-amino-acid chain; its full sequence is Protoheme IX farnesyltransferase (297 aa).

9 helical membrane passes run Val16–Pro36, Val45–Leu65, Val93–Ile113, Thr114–Lys134, Ile141–Gly161, Ser172–Phe192, Val223–Leu243, Gly244–Pro264, and Ile277–Leu297.

Belongs to the UbiA prenyltransferase family. Protoheme IX farnesyltransferase subfamily.

It localises to the cell inner membrane. The catalysed reaction is heme b + (2E,6E)-farnesyl diphosphate + H2O = Fe(II)-heme o + diphosphate. The protein operates within porphyrin-containing compound metabolism; heme O biosynthesis; heme O from protoheme: step 1/1. Its function is as follows. Converts heme B (protoheme IX) to heme O by substitution of the vinyl group on carbon 2 of heme B porphyrin ring with a hydroxyethyl farnesyl side group. This chain is Protoheme IX farnesyltransferase, found in Stenotrophomonas maltophilia (strain R551-3).